The primary structure comprises 704 residues: ATP-dependent DNA helicase Hel308 (704 aa).

Residues Q31 and 49 to 56 (SPTASGKT) contribute to the ATP site. The 165-residue stretch at 36–200 (RKGLLDGKRL…WLNAELVATN (165 aa)) folds into the Helicase ATP-binding domain. The DEAH box signature appears at 148 to 151 (DEFH). The Helicase C-terminal domain maps to 235-439 (AIIAYTLDIV…AFYSFLISII (205 aa)). The interval 366–645 (VVGYMDLIPV…LHARVKDGVK (280 aa)) is binds Hjc. The interval 432-644 (YSFLISIIAS…ELHARVKDGV (213 aa)) is required for helicase activity. The tract at residues 646–704 (PELIELVKIPGIGRVRARLLYQHDIKKPEDIVLNPEKVKQLLGPNLGEKIVREAARTIA) is inhibits intrinsic ATPase, and helicase.

Belongs to the helicase family. Hel308 subfamily. In terms of assembly, monomer; forms a 1:2 complex with Hjc, which may form a complex with Holliday junction DNA. Mg(2+) serves as cofactor.

It carries out the reaction Couples ATP hydrolysis with the unwinding of duplex DNA by translocating in the 3'-5' direction.. The catalysed reaction is ATP + H2O = ADP + phosphate + H(+). It catalyses the reaction Couples ATP hydrolysis with the unwinding of duplex DNA at the replication fork by translocating in the 5'-3' direction. This creates two antiparallel DNA single strands (ssDNA). The leading ssDNA polymer is the template for DNA polymerase III holoenzyme which synthesizes a continuous strand.. Helicase activity is inhibited by Hjc and by PCNA123 and PCNA323. Its function is as follows. An ATP, Mg(2+)-dependent DNA 3'-5' and 5'-3' helicase that may be involved in repair of stalled replication forks. Stimulated by both ss and dsDNA. Unwinds both leading and lagging strands in replication fork structures, unlike orthologs in P.furiosus and M.thermautotrophicus which only unwind the lagging strand and only have 3'-5' helicase activity. Preferentially binds dsDNA with overhangs or branched DNA. Able to anneal DNA substrates that could form a replication fork-like structure, has replication fork reversal activity (at least in vitro). The polypeptide is ATP-dependent DNA helicase Hel308 (Sulfurisphaera tokodaii (strain DSM 16993 / JCM 10545 / NBRC 100140 / 7) (Sulfolobus tokodaii)).